The primary structure comprises 197 residues: MITPNVRRFLNLLCGEYSNQQQAFDNPPLYAHIFLRYRSLPQLKPGSILLEQTYAVDPKNPYRLRMIRAEEQPSGAIKLWNHTFQDPARFAGATFDPALRRSIQTPDLISLDQCHYQVVEQSDGYHGAMEPGCQCIVRRDGKDTVLVSSFHLQGESLQTLDRGHDPITNERCWGSVAGPFRFKRTQSWAADLASAWL.

It belongs to the CpcT/CpeT biliprotein lyase family.

In terms of biological role, covalently attaches a chromophore to Cys residue(s) of phycobiliproteins. In Synechococcus sp. (strain WH8103), this protein is Chromophore lyase CpcT/CpeT.